A 2084-amino-acid polypeptide reads, in one-letter code: RNA-directed RNA polymerase L (2084 aa).

An endonuclease region spans residues 20 to 221 (EPGLYDQIYD…IELQKSEEEL (202 aa)). Histidine 80, aspartate 112, and glutamate 126 together coordinate Mn(2+). Lysine 145 acts as the For endonuclease activity in catalysis. Positions 969–1172 (SARSLGPGSI…FGIYSSEKST (204 aa)) constitute a RdRp catalytic domain. Aspartate 1127 is a binding site for Mg(2+). Residues 1695–1810 (AQSGTLGGFS…TDGCPVRIME (116 aa)) form a cap-binding region.

The protein belongs to the Bunyavirales RNA polymerase family. As to quaternary structure, homomultimer. Interacts with the glycoprotein N; this interaction allows efficient polymerase packaging into virus particles. Interacts with nucleoprotein N. Mn(2+) is required as a cofactor. The cofactor is Mg(2+).

The protein resides in the host Golgi apparatus. The protein localises to the host endoplasmic reticulum. It is found in the host endoplasmic reticulum-Golgi intermediate compartment. It localises to the virion. It catalyses the reaction RNA(n) + a ribonucleoside 5'-triphosphate = RNA(n+1) + diphosphate. Its activity is regulated as follows. Inhibited by Baloxavir acid (BXA). Its function is as follows. RNA-dependent RNA polymerase, which is responsible for the replication and transcription of the viral RNA genome using antigenomic RNA as an intermediate. During transcription, synthesizes subgenomic RNAs and assures their capping by a cap-snatching mechanism, which involves the endonuclease activity cleaving the host capped pre-mRNAs. These short capped RNAs are then used as primers for viral transcription. The 3'-end of subgenomic mRNAs molecules are not polyadenylated. During replication, the polymerase binds the 5' and 3' vRNA extremities at distinct sites. In turn, significant conformational changes occur in the polymerase and in vRNA to initiate active RNA synthesis. As a consequence of the use of the same enzyme for both transcription and replication, these mechanisms need to be well coordinated. The sequence is that of RNA-directed RNA polymerase L from Dabie bandavirus (Severe fever with thrombocytopenia virus).